The primary structure comprises 176 residues: MNKDDDKEGLAMFSALIDGIKPITQDKRHFRTPLKTKQEIALKEQQLHANSYFSDTYQPLLPIQGPMRWLDDGVDSLELKRLRRGDYQPDLLLDLHGYRQSEAKLELVALIQACVKQQSQCCCVMHGYGSGILKQQVPMWLVQHPMVKAFHQAPKEWGGDAALLVLIDLGELPHRR.

A Smr domain is found at 93–168 (LDLHGYRQSE…GDAALLVLID (76 aa)).

Belongs to the SmrB family. In terms of assembly, associates with collided ribosomes, but not with correctly translating polysomes.

Functionally, acts as a ribosome collision sensor. Detects stalled/collided disomes (pairs of ribosomes where the leading ribosome is stalled and a second ribosome has collided with it) and endonucleolytically cleaves mRNA at the 5' boundary of the stalled ribosome. Stalled/collided disomes form a new interface (primarily via the 30S subunits) that binds SmrB. Cleaved mRNA becomes available for tmRNA ligation, leading to ribosomal subunit dissociation and rescue of stalled ribosomes. This chain is Ribosome rescue factor SmrB, found in Shewanella putrefaciens (strain CN-32 / ATCC BAA-453).